A 59-amino-acid polypeptide reads, in one-letter code: UPF0434 protein Rsph17025_2896 (59 aa).

It belongs to the UPF0434 family.

This Cereibacter sphaeroides (strain ATCC 17025 / ATH 2.4.3) (Rhodobacter sphaeroides) protein is UPF0434 protein Rsph17025_2896.